Reading from the N-terminus, the 264-residue chain is Probable transcriptional regulatory protein PPA1157 (264 aa).

This sequence belongs to the TACO1 family.

It localises to the cytoplasm. The protein is Probable transcriptional regulatory protein PPA1157 of Cutibacterium acnes (strain DSM 16379 / KPA171202) (Propionibacterium acnes).